A 193-amino-acid polypeptide reads, in one-letter code: Inner membrane-spanning protein YciB (193 aa).

6 helical membrane-spanning segments follow: residues 5–25 (TLDA…FYIY), 36–56 (IIAA…LMFV), 67–87 (WLVV…QDDF), 93–113 (APII…FLGG), 138–158 (VWVG…FVWV), and 164–184 (FTAF…FWFL).

Belongs to the YciB family.

Its subcellular location is the cell inner membrane. In terms of biological role, plays a role in cell envelope biogenesis, maintenance of cell envelope integrity and membrane homeostasis. The chain is Inner membrane-spanning protein YciB from Vitreoscilla sp. (strain C1).